The chain runs to 340 residues: GTPase Obg (340 aa).

An Obg domain is found at 1-159; sequence MKFLDQAKVY…RTLWLRLKLI (159 aa). Positions 160–327 constitute an OBG-type G domain; that stretch reads ADAGIIGLPN…LLRAGAHIIE (168 aa). Residues 166–173, 191–195, 212–215, 279–282, and 308–310 contribute to the GTP site; these read GLPNAGKS, FTTLY, DIPG, SQID, and SAV. Residues S173 and T193 each coordinate Mg(2+).

This sequence belongs to the TRAFAC class OBG-HflX-like GTPase superfamily. OBG GTPase family. In terms of assembly, monomer. The cofactor is Mg(2+).

The protein resides in the cytoplasm. In terms of biological role, an essential GTPase which binds GTP, GDP and possibly (p)ppGpp with moderate affinity, with high nucleotide exchange rates and a fairly low GTP hydrolysis rate. Plays a role in control of the cell cycle, stress response, ribosome biogenesis and in those bacteria that undergo differentiation, in morphogenesis control. The chain is GTPase Obg from Bartonella henselae (strain ATCC 49882 / DSM 28221 / CCUG 30454 / Houston 1) (Rochalimaea henselae).